A 266-amino-acid polypeptide reads, in one-letter code: Apolipoprotein A-I (266 aa).

The signal sequence occupies residues 1–18 (MKAVVLTLAVLFLTGSQA). 2 repeat units span residues 67–88 (LKLL…EQIG) and 89–110 (PVTQ…QEMS). The tract at residues 67–266 (LKLLDNWDSL…DEAAKKLNAQ (200 aa)) is 10 X approximate tandem repeats. At M109 the chain carries Methionine sulfoxide. One copy of the 3; half-length repeat lies at 111 to 121 (KDLEEVKQKVQ). 5 tandem repeats follow at residues 122–142 (PYLD…RQKV), 144–165 (PLGA…EKLS), 166–187 (PLGE…AQLA), 188–210 (PYSD…DGGA), and 211–231 (SLAE…EKAK). A 9; half-length repeat occupies 232 to 242 (PALEDLRQGLL). Copy 10 of the repeat occupies 243 to 266 (PVLESFKVSLLAAVDEAAKKLNAQ).

Belongs to the apolipoprotein A1/A4/E family. Homodimer. Interacts with APOA1BP and CLU. Component of a sperm activating protein complex (SPAP), consisting of APOA1, an immunoglobulin heavy chain, an immunoglobulin light chain and albumin. Interacts with NDRG1. Interacts with SCGB3A2. Interacts with NAXE and YJEFN3. Glycosylated. In terms of processing, palmitoylated. Post-translationally, phosphorylation sites are present in the extracellular medium. In terms of tissue distribution, major protein of plasma HDL, also found in chylomicrons.

The protein resides in the secreted. In terms of biological role, participates in the reverse transport of cholesterol from tissues to the liver for excretion by promoting cholesterol efflux from tissues and by acting as a cofactor for the lecithin cholesterol acyltransferase (LCAT). As part of the SPAP complex, activates spermatozoa motility. This Ailuropoda melanoleuca (Giant panda) protein is Apolipoprotein A-I (APOA1).